The chain runs to 20 residues: 21 kDa cold shock-induced protein (20 aa).

The span at 1-12 shows a compositional bias: basic and acidic residues; the sequence is TDSIKETIKETV. Residues 1 to 20 are disordered; sequence TDSIKETIKETVNHQAEWPY.

The protein is 21 kDa cold shock-induced protein of Streptococcus thermophilus.